A 1220-amino-acid chain; its full sequence is Protein transport protein Sec31A (1220 aa).

WD repeat units follow at residues 4 to 47 (KEVD…EIFE), 68 to 111 (RYHK…AGDK), 120 to 160 (KHTG…TPMT), 166 to 206 (QPPE…PIIK), 209 to 254 (DHSN…SPLR), 258 to 298 (NHAR…VLYE), and 301 to 342 (TNTQ…DGLR). Residues 161 to 471 (PGAKTQPPED…IDASQTEFEK (311 aa)) are interaction with SEC13. Residues 397-430 (SFSFGGKLVTFENVRMPSHQGAEQQQQQHHVFIS) form a WD 8; interaction with SEC13 repeat. Phosphoserine is present on residues serine 527 and serine 532. Lysine 647 is covalently cross-linked (Glycyl lysine isopeptide (Lys-Gly) (interchain with G-Cter in ubiquitin)). Disordered regions lie at residues 791-908 (GEPV…NAYP) and 924-1096 (QLYA…GNTF). Serine 799 carries the post-translational modification Phosphoserine. The interaction with PDCD6 stretch occupies residues 800–1113 (PKIPYEKQQL…TKKITKKPIP (314 aa)). The short motif at 842-848 (GFIMHGN) is the ALG-2-binding site motif-2 (ABS-2) element. The segment covering 849 to 859 (VNPNAAGQLPT) has biased composition (polar residues). The segment covering 869 to 882 (PPYPQPQPYQPAQP) has biased composition (pro residues). Positions 962–972 (PSSSAYALPPG) are enriched in low complexity. Composition is skewed to polar residues over residues 984–995 (PASQRTGPQNGW) and 1031–1053 (PQSQMLQQQPSAPVPLSSQSSFP). Phosphothreonine is present on threonine 1161. Residue serine 1163 is modified to Phosphoserine. A Glycyl lysine isopeptide (Lys-Gly) (interchain with G-Cter in ubiquitin) cross-link involves residue lysine 1217.

This sequence belongs to the WD repeat SEC31 family. In terms of assembly, COPII is composed of at least 5 proteins: the SEC23/24 complex, the SEC13/31 complex and SAR1. SEC13 and SEC31 make a 2:2 tetramer that forms the edge element of the COPII outer coat. The tetramer self-assembles in multiple copies to form the complete polyhedral cage. Interacts (via WD 8) with SEC13. Interacts with PDCD6; interaction takes place in response to cytosolic calcium increase and leads to bridge together the BCR(KLHL12) complex and SEC31A, leading to monoubiquitination. Interacts with KLHL12. Post-translationally, monoubiquitinated by the BCR(KLHL12) E3 ubiquitin ligase complex, leading to regulate the size of COPII coats. Abundantly and ubiquitously expressed.

Its subcellular location is the cytoplasm. It localises to the cytoplasmic vesicle. The protein resides in the COPII-coated vesicle membrane. The protein localises to the endoplasmic reticulum membrane. It is found in the cytosol. Functionally, component of the coat protein complex II (COPII) which promotes the formation of transport vesicles from the endoplasmic reticulum (ER). The coat has two main functions, the physical deformation of the endoplasmic reticulum membrane into vesicles and the selection of cargo molecules. The polypeptide is Protein transport protein Sec31A (SEC31A) (Homo sapiens (Human)).